We begin with the raw amino-acid sequence, 295 residues long: NAD kinase (295 aa).

D74 (proton acceptor) is an active-site residue. NAD(+)-binding positions include 74–75, 148–149, R176, D178, and 189–194; these read DG, NE, and TAYAMS.

Belongs to the NAD kinase family. A divalent metal cation serves as cofactor.

Its subcellular location is the cytoplasm. It catalyses the reaction NAD(+) + ATP = ADP + NADP(+) + H(+). Its function is as follows. Involved in the regulation of the intracellular balance of NAD and NADP, and is a key enzyme in the biosynthesis of NADP. Catalyzes specifically the phosphorylation on 2'-hydroxyl of the adenosine moiety of NAD to yield NADP. In Acidithiobacillus ferrooxidans (strain ATCC 23270 / DSM 14882 / CIP 104768 / NCIMB 8455) (Ferrobacillus ferrooxidans (strain ATCC 23270)), this protein is NAD kinase.